The following is a 623-amino-acid chain: uncharacterized protein (623 aa).

Residues 256 to 351 (AEEKLLSKNK…EEIHGLKKKN (96 aa)) adopt a coiled-coil conformation. Disordered regions lie at residues 417-485 (NRRN…SPSS) and 497-536 (ALSS…ECAT). The segment covering 422-431 (LESVPFNTLS) has biased composition (polar residues). The span at 452–481 (ELKKPAESYGDETKKPNQHNKDGSIDEKPK) shows a compositional bias: basic and acidic residues.

This is an uncharacterized protein from Arabidopsis thaliana (Mouse-ear cress).